A 336-amino-acid chain; its full sequence is N-acetyl-gamma-glutamyl-phosphate reductase (336 aa).

Cysteine 144 is an active-site residue.

Belongs to the NAGSA dehydrogenase family. Type 1 subfamily.

It localises to the cytoplasm. It catalyses the reaction N-acetyl-L-glutamate 5-semialdehyde + phosphate + NADP(+) = N-acetyl-L-glutamyl 5-phosphate + NADPH + H(+). It functions in the pathway amino-acid biosynthesis; L-arginine biosynthesis; N(2)-acetyl-L-ornithine from L-glutamate: step 3/4. Its function is as follows. Catalyzes the NADPH-dependent reduction of N-acetyl-5-glutamyl phosphate to yield N-acetyl-L-glutamate 5-semialdehyde. In Methanosarcina acetivorans (strain ATCC 35395 / DSM 2834 / JCM 12185 / C2A), this protein is N-acetyl-gamma-glutamyl-phosphate reductase.